The chain runs to 272 residues: N-acetylmuramoyl-L-alanine amidase CwlA (272 aa).

Residues 24-142 (KAEYITIHNT…QDWNGKYCPH (119 aa)) enclose the N-acetylmuramoyl-L-alanine amidase domain.

It belongs to the N-acetylmuramoyl-L-alanine amidase 2 family.

The enzyme catalyses Hydrolyzes the link between N-acetylmuramoyl residues and L-amino acid residues in certain cell-wall glycopeptides.. Functionally, autolysins are involved in some important biological processes such as cell separation, cell-wall turnover, competence for genetic transformation, formation of the flagella and sporulation. In Bacillus subtilis (strain 168), this protein is N-acetylmuramoyl-L-alanine amidase CwlA (cwlA).